The following is a 129-amino-acid chain: Small ribosomal subunit protein uS11 (129 aa).

The protein belongs to the universal ribosomal protein uS11 family. In terms of assembly, part of the 30S ribosomal subunit. Interacts with proteins S7 and S18. Binds to IF-3.

Functionally, located on the platform of the 30S subunit, it bridges several disparate RNA helices of the 16S rRNA. Forms part of the Shine-Dalgarno cleft in the 70S ribosome. The chain is Small ribosomal subunit protein uS11 from Hydrogenovibrio crunogenus (strain DSM 25203 / XCL-2) (Thiomicrospira crunogena).